A 212-amino-acid polypeptide reads, in one-letter code: Calaxin (212 aa).

3 consecutive EF-hand domains span residues 65-100, 101-136, and 146-181; these read TDDM…FLRG, TLEE…SLLK, and GIKD…ETLL. Positions 78, 80, 82, 84, 89, 114, 116, 118, 125, 159, 161, 163, 165, and 170 each coordinate Ca(2+).

Component of the outer dynein arm-docking complex along with ODAD1, ODAD2, ODAD3 and ODAD4. As to expression, expressed in trachea multiciliated cells.

The protein localises to the cytoplasm. Its subcellular location is the cytoskeleton. It is found in the cilium axoneme. The protein resides in the cell projection. It localises to the cilium. The protein localises to the flagellum. In terms of biological role, component of the outer dynein arm-docking complex (ODA-DC) that mediates outer dynein arms (ODA) binding onto the doublet microtubule. Seems to regulate the assembly of both ODAs and their axonemal docking complex onto ciliary microtubules. Regulates ciliary and flagellar motility and is required for cilia-driven determination of body laterality. In Bos taurus (Bovine), this protein is Calaxin (CLXN).